A 293-amino-acid chain; its full sequence is Diaminopimelate epimerase (293 aa).

Substrate-binding residues include N17, Q47, and N67. Catalysis depends on C76, which acts as the Proton donor. Residues 77–78, N164, N197, and 215–216 contribute to the substrate site; these read GN and ER. The active-site Proton acceptor is C224. 225-226 lines the substrate pocket; that stretch reads GS.

The protein belongs to the diaminopimelate epimerase family. As to quaternary structure, homodimer.

The protein localises to the cytoplasm. It catalyses the reaction (2S,6S)-2,6-diaminopimelate = meso-2,6-diaminopimelate. The protein operates within amino-acid biosynthesis; L-lysine biosynthesis via DAP pathway; DL-2,6-diaminopimelate from LL-2,6-diaminopimelate: step 1/1. In terms of biological role, catalyzes the stereoinversion of LL-2,6-diaminopimelate (L,L-DAP) to meso-diaminopimelate (meso-DAP), a precursor of L-lysine and an essential component of the bacterial peptidoglycan. This chain is Diaminopimelate epimerase, found in Rhodopseudomonas palustris (strain ATCC BAA-98 / CGA009).